We begin with the raw amino-acid sequence, 417 residues long: Serine--tRNA ligase (417 aa).

232–234 (TAE) contacts L-serine. 263–265 (RKE) contacts ATP. Glutamate 286 contributes to the L-serine binding site. 350–353 (EISS) serves as a coordination point for ATP. Serine 385 is an L-serine binding site.

This sequence belongs to the class-II aminoacyl-tRNA synthetase family. Type-1 seryl-tRNA synthetase subfamily. As to quaternary structure, homodimer. The tRNA molecule binds across the dimer.

The protein localises to the cytoplasm. The catalysed reaction is tRNA(Ser) + L-serine + ATP = L-seryl-tRNA(Ser) + AMP + diphosphate + H(+). It carries out the reaction tRNA(Sec) + L-serine + ATP = L-seryl-tRNA(Sec) + AMP + diphosphate + H(+). It functions in the pathway aminoacyl-tRNA biosynthesis; selenocysteinyl-tRNA(Sec) biosynthesis; L-seryl-tRNA(Sec) from L-serine and tRNA(Sec): step 1/1. Its function is as follows. Catalyzes the attachment of serine to tRNA(Ser). Is also able to aminoacylate tRNA(Sec) with serine, to form the misacylated tRNA L-seryl-tRNA(Sec), which will be further converted into selenocysteinyl-tRNA(Sec). The protein is Serine--tRNA ligase of Sulfurihydrogenibium sp. (strain YO3AOP1).